The sequence spans 386 residues: Eukaryotic translation initiation factor 3 subunit M (386 aa).

The PCI domain maps to asparagine 181–histidine 343.

The protein belongs to the eIF-3 subunit M family. As to quaternary structure, component of the eukaryotic translation initiation factor 3 (eIF-3) complex.

The protein localises to the cytoplasm. Component of the eukaryotic translation initiation factor 3 (eIF-3) complex, which is involved in protein synthesis of a specialized repertoire of mRNAs and, together with other initiation factors, stimulates binding of mRNA and methionyl-tRNAi to the 40S ribosome. The eIF-3 complex specifically targets and initiates translation of a subset of mRNAs involved in cell proliferation. In Aedes aegypti (Yellowfever mosquito), this protein is Eukaryotic translation initiation factor 3 subunit M.